Reading from the N-terminus, the 205-residue chain is Leucyl/phenylalanyl-tRNA--protein transferase (205 aa).

The protein belongs to the L/F-transferase family.

The protein localises to the cytoplasm. The enzyme catalyses N-terminal L-lysyl-[protein] + L-leucyl-tRNA(Leu) = N-terminal L-leucyl-L-lysyl-[protein] + tRNA(Leu) + H(+). It catalyses the reaction N-terminal L-arginyl-[protein] + L-leucyl-tRNA(Leu) = N-terminal L-leucyl-L-arginyl-[protein] + tRNA(Leu) + H(+). It carries out the reaction L-phenylalanyl-tRNA(Phe) + an N-terminal L-alpha-aminoacyl-[protein] = an N-terminal L-phenylalanyl-L-alpha-aminoacyl-[protein] + tRNA(Phe). Functionally, functions in the N-end rule pathway of protein degradation where it conjugates Leu, Phe and, less efficiently, Met from aminoacyl-tRNAs to the N-termini of proteins containing an N-terminal arginine or lysine. In Mesorhizobium japonicum (strain LMG 29417 / CECT 9101 / MAFF 303099) (Mesorhizobium loti (strain MAFF 303099)), this protein is Leucyl/phenylalanyl-tRNA--protein transferase.